A 293-amino-acid polypeptide reads, in one-letter code: 3-methyl-2-oxobutanoate hydroxymethyltransferase (293 aa).

The segment at 1-26 (MTQAPVTAGTPYGTIPPASPLPQRRP) is disordered. Mg(2+) is bound by residues Asp68 and Asp111. 3-methyl-2-oxobutanoate-binding positions include 68-69 (DS), Asp111, and Lys140. Mg(2+) is bound at residue Glu142. Glu209 serves as the catalytic Proton acceptor.

Belongs to the PanB family. Homodecamer; pentamer of dimers. Mg(2+) is required as a cofactor.

It is found in the cytoplasm. The catalysed reaction is 3-methyl-2-oxobutanoate + (6R)-5,10-methylene-5,6,7,8-tetrahydrofolate + H2O = 2-dehydropantoate + (6S)-5,6,7,8-tetrahydrofolate. It participates in cofactor biosynthesis; (R)-pantothenate biosynthesis; (R)-pantoate from 3-methyl-2-oxobutanoate: step 1/2. Catalyzes the reversible reaction in which hydroxymethyl group from 5,10-methylenetetrahydrofolate is transferred onto alpha-ketoisovalerate to form ketopantoate. The polypeptide is 3-methyl-2-oxobutanoate hydroxymethyltransferase (Delftia acidovorans (strain DSM 14801 / SPH-1)).